We begin with the raw amino-acid sequence, 366 residues long: Dihydroorotate dehydrogenase (quinone) (366 aa).

FMN contacts are provided by residues 74–78 (AGFDK) and T98. K78 contributes to the substrate binding site. 123 to 127 (NRMGF) is a substrate binding site. 2 residues coordinate FMN: N156 and N189. N189 is a substrate binding site. The active-site Nucleophile is the S192. A substrate-binding site is contributed by N194. FMN is bound by residues K231 and T259. 260-261 (NT) contributes to the substrate binding site. FMN contacts are provided by residues G285, G314, and 335 to 336 (YT).

It belongs to the dihydroorotate dehydrogenase family. Type 2 subfamily. In terms of assembly, monomer. It depends on FMN as a cofactor.

The protein localises to the cell membrane. The enzyme catalyses (S)-dihydroorotate + a quinone = orotate + a quinol. It participates in pyrimidine metabolism; UMP biosynthesis via de novo pathway; orotate from (S)-dihydroorotate (quinone route): step 1/1. Functionally, catalyzes the conversion of dihydroorotate to orotate with quinone as electron acceptor. The sequence is that of Dihydroorotate dehydrogenase (quinone) from Kineococcus radiotolerans (strain ATCC BAA-149 / DSM 14245 / SRS30216).